Consider the following 88-residue polypeptide: Eclosion hormone (88 aa).

Positions 1-26 (MANKLTAVIVVALAVAFMVNLDYANC) are cleaved as a signal peptide. Disulfide bonds link Cys-40–Cys-64, Cys-44–Cys-60, and Cys-47–Cys-75.

Belongs to the insect eclosion hormone family.

The protein resides in the secreted. Neuropeptide that triggers the performance of ecdysis behaviors at the end of a molt. It triggers adult behavior patterns: larval, pupal and adult ecdysis, and plasticization during the molt. This chain is Eclosion hormone, found in Bombyx mori (Silk moth).